The chain runs to 600 residues: Proline--tRNA ligase (600 aa).

The protein belongs to the class-II aminoacyl-tRNA synthetase family. ProS type 1 subfamily. As to quaternary structure, homodimer.

It is found in the cytoplasm. It catalyses the reaction tRNA(Pro) + L-proline + ATP = L-prolyl-tRNA(Pro) + AMP + diphosphate. In terms of biological role, catalyzes the attachment of proline to tRNA(Pro) in a two-step reaction: proline is first activated by ATP to form Pro-AMP and then transferred to the acceptor end of tRNA(Pro). As ProRS can inadvertently accommodate and process non-cognate amino acids such as alanine and cysteine, to avoid such errors it has two additional distinct editing activities against alanine. One activity is designated as 'pretransfer' editing and involves the tRNA(Pro)-independent hydrolysis of activated Ala-AMP. The other activity is designated 'posttransfer' editing and involves deacylation of mischarged Ala-tRNA(Pro). The misacylated Cys-tRNA(Pro) is not edited by ProRS. In Prochlorococcus marinus subsp. pastoris (strain CCMP1986 / NIES-2087 / MED4), this protein is Proline--tRNA ligase.